The sequence spans 155 residues: Cytochrome c-type biogenesis protein CcmE (155 aa).

At 1 to 8 (MHPKRKQR) the chain is on the cytoplasmic side. A helical; Signal-anchor for type II membrane protein membrane pass occupies residues 9–29 (LILVLFVVLVSSVGVSLTLYA). The Periplasmic portion of the chain corresponds to 30–155 (LNENINLFYP…KTCKGISYDS (126 aa)). The heme site is built by His124 and Tyr128.

The protein belongs to the CcmE/CycJ family.

It localises to the cell inner membrane. Its function is as follows. Heme chaperone required for the biogenesis of c-type cytochromes. Transiently binds heme delivered by CcmC and transfers the heme to apo-cytochromes in a process facilitated by CcmF and CcmH. The chain is Cytochrome c-type biogenesis protein CcmE from Teredinibacter turnerae (strain ATCC 39867 / T7901).